The primary structure comprises 307 residues: Dihydroorotate dehydrogenase A (fumarate) (307 aa).

FMN-binding positions include serine 21 and 46-47; that span reads KT. Residues lysine 46, 70–74, and asparagine 130 each bind substrate; that span reads NSVGL. An FMN-binding site is contributed by asparagine 130. Cysteine 133 (nucleophile) is an active-site residue. The FMN site is built by lysine 168 and isoleucine 194. 195-196 is a substrate binding site; the sequence is NT. Residues glycine 220, 246–247, and 268–269 contribute to the FMN site; these read GG and GS.

Belongs to the dihydroorotate dehydrogenase family. Type 1 subfamily. Homodimer. FMN serves as cofactor.

The protein localises to the cytoplasm. The enzyme catalyses (S)-dihydroorotate + fumarate = orotate + succinate. Its pathway is pyrimidine metabolism; UMP biosynthesis via de novo pathway. Functionally, catalyzes the conversion of dihydroorotate to orotate with fumarate as the electron acceptor. The chain is Dihydroorotate dehydrogenase A (fumarate) (pyrD) from Lactobacillus delbrueckii subsp. bulgaricus (strain ATCC BAA-365 / Lb-18).